A 505-amino-acid chain; its full sequence is AMP phosphorylase (505 aa).

AMP contacts are provided by residues Gly-170, 196 to 201 (SRAITS), and Thr-205. Catalysis depends on Asp-258, which acts as the Proton donor. Residues Ser-266 and Lys-290 each coordinate AMP.

This sequence belongs to the thymidine/pyrimidine-nucleoside phosphorylase family. Type 2 subfamily.

The enzyme catalyses AMP + phosphate = alpha-D-ribose 1,5-bisphosphate + adenine. It carries out the reaction CMP + phosphate = cytosine + alpha-D-ribose 1,5-bisphosphate. The catalysed reaction is UMP + phosphate = alpha-D-ribose 1,5-bisphosphate + uracil. Catalyzes the conversion of AMP and phosphate to adenine and ribose 1,5-bisphosphate (R15P). Exhibits phosphorylase activity toward CMP and UMP in addition to AMP. Functions in an archaeal AMP degradation pathway, together with R15P isomerase and RubisCO. This chain is AMP phosphorylase, found in Methanococcus maripaludis (strain C7 / ATCC BAA-1331).